The chain runs to 232 residues: Enolase-phosphatase E1 (232 aa).

Belongs to the HAD-like hydrolase superfamily. MasA/MtnC family. Monomer. It depends on Mg(2+) as a cofactor.

The catalysed reaction is 5-methylsulfanyl-2,3-dioxopentyl phosphate + H2O = 1,2-dihydroxy-5-(methylsulfanyl)pent-1-en-3-one + phosphate. The protein operates within amino-acid biosynthesis; L-methionine biosynthesis via salvage pathway; L-methionine from S-methyl-5-thio-alpha-D-ribose 1-phosphate: step 3/6. Its pathway is amino-acid biosynthesis; L-methionine biosynthesis via salvage pathway; L-methionine from S-methyl-5-thio-alpha-D-ribose 1-phosphate: step 4/6. Its function is as follows. Bifunctional enzyme that catalyzes the enolization of 2,3-diketo-5-methylthiopentyl-1-phosphate (DK-MTP-1-P) into the intermediate 2-hydroxy-3-keto-5-methylthiopentenyl-1-phosphate (HK-MTPenyl-1-P), which is then dephosphorylated to form the acireductone 1,2-dihydroxy-3-keto-5-methylthiopentene (DHK-MTPene). The chain is Enolase-phosphatase E1 from Xylella fastidiosa (strain Temecula1 / ATCC 700964).